Here is a 160-residue protein sequence, read N- to C-terminus: C-type lectin mosGCTL-1 (160 aa).

The N-terminal stretch at 1–20 (MLTKGITLILLLVLVHSSHG) is a signal peptide. Positions 23-140 (TPNRKFYIPS…YHWSWNDNTC (118 aa)) constitute a C-type lectin domain. 2 disulfide bridges follow: Cys-44-Cys-140 and Cys-120-Cys-140. N-linked (GlcNAc...) asparagine glycosylation is present at Asn-76.

Interacts with putative receptor-type tyrosine-protein phosphatase mosPTP-1; the interaction probably mediates the recruitment of West Nile virus particles in complex with C-type lectin mosGCTL-1 to the cell surface. As to quaternary structure, (Microbial infection) Interacts with envelope protein E and virions of West Nile virus in a calcium-dependent manner. In terms of tissue distribution, female salivary gland (at protein level).

It localises to the secreted. Putative lectin. Functionally, (Microbial infection) Facilitates West Nile virus infection in mosquitoes probably via capturing viral particles and presenting them to a ligand on the cell surface, thereby facilitating viral entry. The protein is C-type lectin mosGCTL-1 of Aedes aegypti (Yellowfever mosquito).